The following is a 185-amino-acid chain: Homeobox expressed in ES cells 1 (185 aa).

A DNA-binding region (homeobox) is located at residues glycine 108–histidine 167.

This sequence belongs to the ANF homeobox family. As to quaternary structure, can form heterodimers with PROP1 in binding to DNA. Interacts with TLE1.

It localises to the nucleus. Its function is as follows. Required for the normal development of the forebrain, eyes and other anterior structures such as the olfactory placodes and pituitary gland. Possible transcriptional repressor. Binds to the palindromic PIII sequence, 5'-AGCTTGAGTCTAATTGAATTAACTGTAC-3'. HESX1 and PROP1 bind as heterodimers on this palindromic site, and, in vitro, HESX1 can antagonize PROP1 activation. The polypeptide is Homeobox expressed in ES cells 1 (HESX1) (Pan troglodytes (Chimpanzee)).